The chain runs to 152 residues: Superoxide dismutase [Cu-Zn] 1 (152 aa).

H45, H47, and H62 together coordinate Cu cation. A disulfide bridge links C56 with C145. Residues H62, H70, H79, and D82 each contribute to the Zn(2+) site. A Cu cation-binding site is contributed by H119.

Belongs to the Cu-Zn superoxide dismutase family. In terms of assembly, homodimer. Interacts with DJ1A and CCS. Requires Cu cation as cofactor. Zn(2+) serves as cofactor. Expressed in leaves (at protein level). The spatial localization is regulated by miR398-mediated silencing. Mostly present in flowers, old rosette leaves and inflorescence, and, to a lower extent, in cauline leaves, stems and roots.

The protein localises to the cytoplasm. The protein resides in the cytosol. Its subcellular location is the nucleus. It carries out the reaction 2 superoxide + 2 H(+) = H2O2 + O2. Its function is as follows. Destroys radicals which are normally produced within the cells and which are toxic to biological systems. This is Superoxide dismutase [Cu-Zn] 1 (CSD1) from Arabidopsis thaliana (Mouse-ear cress).